The primary structure comprises 202 residues: NADH-quinone oxidoreductase subunit C (202 aa).

This sequence belongs to the complex I 30 kDa subunit family. As to quaternary structure, NDH-1 is composed of 14 different subunits. Subunits NuoB, C, D, E, F, and G constitute the peripheral sector of the complex.

It is found in the cell inner membrane. It catalyses the reaction a quinone + NADH + 5 H(+)(in) = a quinol + NAD(+) + 4 H(+)(out). Its function is as follows. NDH-1 shuttles electrons from NADH, via FMN and iron-sulfur (Fe-S) centers, to quinones in the respiratory chain. The immediate electron acceptor for the enzyme in this species is believed to be ubiquinone. Couples the redox reaction to proton translocation (for every two electrons transferred, four hydrogen ions are translocated across the cytoplasmic membrane), and thus conserves the redox energy in a proton gradient. The chain is NADH-quinone oxidoreductase subunit C from Brucella abortus (strain 2308).